A 299-amino-acid polypeptide reads, in one-letter code: Phosphoribosylaminoimidazole-succinocarboxamide synthase (299 aa).

It belongs to the SAICAR synthetase family.

It catalyses the reaction 5-amino-1-(5-phospho-D-ribosyl)imidazole-4-carboxylate + L-aspartate + ATP = (2S)-2-[5-amino-1-(5-phospho-beta-D-ribosyl)imidazole-4-carboxamido]succinate + ADP + phosphate + 2 H(+). The protein operates within purine metabolism; IMP biosynthesis via de novo pathway; 5-amino-1-(5-phospho-D-ribosyl)imidazole-4-carboxamide from 5-amino-1-(5-phospho-D-ribosyl)imidazole-4-carboxylate: step 1/2. The sequence is that of Phosphoribosylaminoimidazole-succinocarboxamide synthase (ade7) from Schizosaccharomyces pombe (strain 972 / ATCC 24843) (Fission yeast).